Here is a 476-residue protein sequence, read N- to C-terminus: Surface membrane glycoprotein GP46/M-2 (476 aa).

Residues 1 to 32 form the signal peptide; that stretch reads MAQCVRRLVLAAPLAAVVALLLCTSSAPVARA. A run of 4 repeats spans residues 107–130, 131–154, 155–178, and 179–202. The 4 X 24 AA tandem repeats stretch occupies residues 107 to 202; the sequence is VMILALDFGA…FCGCVPDSWR (96 aa). 2 disordered regions span residues 231–255 and 348–370; these read APGT…PSPG and ALSP…RRRA. A lipid anchor (GPI-anchor amidated cysteine) is attached at Cys452. Residues 453–476 constitute a propeptide, removed in mature form; the sequence is PALFDGARLRCCALVVCAGAAPAG.

The protein resides in the cell membrane. The sequence is that of Surface membrane glycoprotein GP46/M-2 from Leishmania amazonensis.